Reading from the N-terminus, the 859-residue chain is Protein SEY1 (859 aa).

Topologically, residues 1-742 (MMMNSHFAGV…KRSAIGGITQ (742 aa)) are cytoplasmic. Residues 49–291 (GFNYHLISVF…FQPQYHRRIP (243 aa)) form the GB1/RHD3-type G domain. A GTP-binding site is contributed by 59–66 (GSQSTGKS). The stretch at 476–496 (FEHELKVYRKDLDDVSGRLRK) forms a coiled coil. A disordered region spans residues 525–544 (LGTGRGGSGAPEHGERPPSE). A helical transmembrane segment spans residues 743-763 (VPLYFYGLLVALGWNEIVAVL). Residues 764–766 (RNP) are Lumenal-facing. A helical transmembrane segment spans residues 767-787 (VYFIFLILCAVGAYVTYTLNL). Over 788–859 (WGPMIRMGNA…DAEVEDLDDI (72 aa)) the chain is Cytoplasmic. The disordered stretch occupies residues 816–859 (SSESGRQAMAMSGNQPRGESVRMNRLNGNGKKDEDAEVEDLDDI). The span at 850–859 (DAEVEDLDDI) shows a compositional bias: acidic residues.

This sequence belongs to the TRAFAC class dynamin-like GTPase superfamily. GB1/RHD3 GTPase family. RHD3 subfamily.

The protein localises to the endoplasmic reticulum membrane. Cooperates with the reticulon proteins and tubule-shaping DP1 family proteins to generate and maintain the structure of the tubular endoplasmic reticulum network. Has GTPase activity, which is required for its function in ER organization. The sequence is that of Protein SEY1 from Phaeosphaeria nodorum (strain SN15 / ATCC MYA-4574 / FGSC 10173) (Glume blotch fungus).